Reading from the N-terminus, the 181-residue chain is Ribulose bisphosphate carboxylase small subunit, chloroplastic (181 aa).

The N-terminal 56 residues, 1-56 (MASISSSAIATVNRTTSTQASLAAPFTGLKSNVAFPVTKKANNDFSSLPSNGGRVQ), are a transit peptide targeting the chloroplast.

This sequence belongs to the RuBisCO small chain family. Heterohexadecamer of 8 large and 8 small subunits.

The protein localises to the plastid. It localises to the chloroplast. Its function is as follows. RuBisCO catalyzes two reactions: the carboxylation of D-ribulose 1,5-bisphosphate, the primary event in carbon dioxide fixation, as well as the oxidative fragmentation of the pentose substrate. Both reactions occur simultaneously and in competition at the same active site. Although the small subunit is not catalytic it is essential for maximal activity. The polypeptide is Ribulose bisphosphate carboxylase small subunit, chloroplastic (Lactuca sativa (Garden lettuce)).